We begin with the raw amino-acid sequence, 1324 residues long: Sal-like protein 1 (1324 aa).

The interval 1 to 42 (MSRRKQAKPQHFQSDPEVASLPRRDGDTEKGQPSRPTKSKDA) is disordered. Residues 22-42 (PRRDGDTEKGQPSRPTKSKDA) are compositionally biased toward basic and acidic residues. The segment at 43–65 (HVCGRCCAEFFELSDLLLHKKNC) adopts a C2H2-type 1; atypical zinc-finger fold. Disordered stretches follow at residues 77–102 (NPASPPETFSPSPPPDNPDEQMNDTV), 108–127 (VDCSDLSEHNGLDREESMEV), 132–172 (ANKS…TSAI), and 317–336 (PPIQLPQSSSGNTIIPSNSG). A compositionally biased stretch (basic and acidic residues) spans 113–124 (LSEHNGLDREES). Over residues 135–158 (SGSGTSSGSHSSTAPSSSSSSSSS) the composition is skewed to low complexity. The segment covering 321–336 (LPQSSSGNTIIPSNSG) has biased composition (polar residues). Lysine 439 participates in a covalent cross-link: Glycyl lysine isopeptide (Lys-Gly) (interchain with G-Cter in SUMO2). C2H2-type zinc fingers lie at residues 449–471 (HKCRFCAKVFGSDSALQIHLRSH) and 477–499 (FKCNICGNRFSTKGNLKVHFQRH). The segment at 577–646 (PIPISHSATS…ASSSVLSSPA (70 aa)) is disordered. Residues serine 590, serine 593, and serine 595 each carry the phosphoserine modification. Over residues 633–646 (SVPTASSSVLSSPA) the composition is skewed to low complexity. Residues lysine 673, lysine 690, and lysine 701 each participate in a glycyl lysine isopeptide (Lys-Gly) (interchain with G-Cter in SUMO2) cross-link. C2H2-type zinc fingers lie at residues 706–728 (NECIICHRVLSCQSALKMHYRTH), 734–756 (FKCKICGRAFTTKGNLKTHYSVH), and 766–788 (HSCPICQKKFTNAVVLQQHIRMH). 2 disordered regions span residues 790–856 (GGQI…SSPL) and 894–963 (EGDV…LSPT). Residues 802-811 (YSESMESDTG) show a composition bias toward polar residues. Residues 820–833 (DLDNFSDENMEDCP) are compositionally biased toward acidic residues. A compositionally biased stretch (low complexity) spans 843–856 (SADASQDSLSSSPL). Over residues 899-936 (TNDSSSVGGDMESQSAGSPAISESTSSMQALSPSNSTQ) the composition is skewed to polar residues. A compositionally biased stretch (basic and acidic residues) spans 937–949 (EFHKSPSIEEKPQ). Residues serine 941 and serine 943 each carry the phosphoserine modification. Residues lysine 947 and lysine 982 each participate in a glycyl lysine isopeptide (Lys-Gly) (interchain with G-Cter in SUMO2) cross-link. 2 consecutive C2H2-type zinc fingers follow at residues 1001–1023 (TACDICGKTFACQSALDIHYRSH) and 1029–1051 (FICTVCNRGFSTKGNLKQHMLTH). A Glycyl lysine isopeptide (Lys-Gly) (interchain with G-Cter in SUMO2) cross-link involves residue lysine 1086. The interval 1095 to 1120 (VSPQDSKDTPTSHVPSGPLSSSATSP) is disordered. The segment covering 1105–1119 (TSHVPSGPLSSSATS) has biased composition (polar residues). 2 C2H2-type zinc fingers span residues 1134-1156 (HYCNTCGKTFSSSSALQIHERTH) and 1162-1184 (FACTICGRAFTTKGNLKVHMGTH). Residues lysine 1219, lysine 1299, and lysine 1319 each participate in a glycyl lysine isopeptide (Lys-Gly) (interchain with G-Cter in SUMO2) cross-link.

Belongs to the sal C2H2-type zinc-finger protein family. In terms of assembly, may associate with NuRD histone deacetylase complex (HDAC). Interacts with components of HDAC complex including HDAC1, HDAC2, RBBP4, RBPP7, MTA1 and MTA2. Interacts with CCNQ. Interacts with NSD2 (via PHD-type zinc fingers 1, 2 and 3). As to expression, highest levels in kidney. Lower levels in adult brain (enriched in corpus callosum, lower expression in substantia nigra) and liver.

The protein localises to the nucleus. Transcriptional repressor involved in organogenesis. Plays an essential role in ureteric bud invasion during kidney development. In Homo sapiens (Human), this protein is Sal-like protein 1 (SALL1).